Reading from the N-terminus, the 1802-residue chain is Protein TIC 214 (1802 aa).

The next 6 helical transmembrane spans lie at 19 to 39, 68 to 88, 91 to 111, 133 to 153, 176 to 196, and 227 to 247; these read IINSVVVVGLYYGFLTTFSIG, FIAGQLMMFISIYYAPLHLAL, PHTITVLALPYLLFHFFWNNH, VFLNNLIFQLFNHFILPSSML, VGWLIGHILFMKWVGLVLVWI, and IFSILLFITCVYYLGRIPSPI.

It belongs to the TIC214 family. In terms of assembly, part of the Tic complex.

It localises to the plastid. Its subcellular location is the chloroplast inner membrane. Its function is as follows. Involved in protein precursor import into chloroplasts. May be part of an intermediate translocation complex acting as a protein-conducting channel at the inner envelope. This is Protein TIC 214 from Nasturtium officinale (Watercress).